Reading from the N-terminus, the 61-residue chain is Probable tautomerase SSP1389 (61 aa).

Catalysis depends on Pro-2, which acts as the Proton acceptor; via imino nitrogen.

Belongs to the 4-oxalocrotonate tautomerase family.

The chain is Probable tautomerase SSP1389 from Staphylococcus saprophyticus subsp. saprophyticus (strain ATCC 15305 / DSM 20229 / NCIMB 8711 / NCTC 7292 / S-41).